We begin with the raw amino-acid sequence, 398 residues long: Acetate kinase 1 (398 aa).

Asn-9 serves as a coordination point for Mg(2+). Lys-16 serves as a coordination point for ATP. Arg-89 is a substrate binding site. Residue Asp-146 is the Proton donor/acceptor of the active site. Residues 206-210 (HLGNG), 281-283 (DCR), and 329-333 (GIGEN) each bind ATP. Glu-384 contributes to the Mg(2+) binding site.

It belongs to the acetokinase family. In terms of assembly, homodimer. Requires Mg(2+) as cofactor. It depends on Mn(2+) as a cofactor.

It localises to the cytoplasm. It carries out the reaction acetate + ATP = acetyl phosphate + ADP. The protein operates within metabolic intermediate biosynthesis; acetyl-CoA biosynthesis; acetyl-CoA from acetate: step 1/2. Its function is as follows. Catalyzes the formation of acetyl phosphate from acetate and ATP. Can also catalyze the reverse reaction. In Photobacterium profundum (strain SS9), this protein is Acetate kinase 1.